A 169-amino-acid chain; its full sequence is Positive control factor (169 aa).

A DNA-binding region (H-T-H motif) is located at residues 132 to 157 (YERIADLLGVKKSTVQTTIKRASLKM).

Functionally, positive regulatory protein that acts at the late promoter PL. The chain is Positive control factor (xpf) from Bacillus subtilis (strain 168).